The primary structure comprises 473 residues: UDP-N-acetylmuramate--L-alanine ligase (473 aa).

Position 122–128 (122–128) interacts with ATP; sequence GTHGKTT.

It belongs to the MurCDEF family.

The protein localises to the cytoplasm. The catalysed reaction is UDP-N-acetyl-alpha-D-muramate + L-alanine + ATP = UDP-N-acetyl-alpha-D-muramoyl-L-alanine + ADP + phosphate + H(+). Its pathway is cell wall biogenesis; peptidoglycan biosynthesis. Cell wall formation. This is UDP-N-acetylmuramate--L-alanine ligase from Teredinibacter turnerae (strain ATCC 39867 / T7901).